A 353-amino-acid chain; its full sequence is tRNA N6-adenosine threonylcarbamoyltransferase (353 aa).

Residues histidine 111 and histidine 115 each coordinate Fe cation. Substrate-binding positions include 148–152 (LVSGG), aspartate 181, glycine 194, and asparagine 286. A Fe cation-binding site is contributed by aspartate 314.

It belongs to the KAE1 / TsaD family. Fe(2+) serves as cofactor.

It localises to the cytoplasm. The catalysed reaction is L-threonylcarbamoyladenylate + adenosine(37) in tRNA = N(6)-L-threonylcarbamoyladenosine(37) in tRNA + AMP + H(+). Required for the formation of a threonylcarbamoyl group on adenosine at position 37 (t(6)A37) in tRNAs that read codons beginning with adenine. Is involved in the transfer of the threonylcarbamoyl moiety of threonylcarbamoyl-AMP (TC-AMP) to the N6 group of A37, together with TsaE and TsaB. TsaD likely plays a direct catalytic role in this reaction. The protein is tRNA N6-adenosine threonylcarbamoyltransferase of Blochmanniella floridana.